The primary structure comprises 208 residues: N-(5'-phosphoribosyl)anthranilate isomerase (208 aa).

It belongs to the TrpF family.

It catalyses the reaction N-(5-phospho-beta-D-ribosyl)anthranilate = 1-(2-carboxyphenylamino)-1-deoxy-D-ribulose 5-phosphate. Its pathway is amino-acid biosynthesis; L-tryptophan biosynthesis; L-tryptophan from chorismate: step 3/5. This chain is N-(5'-phosphoribosyl)anthranilate isomerase, found in Methanococcus maripaludis (strain C5 / ATCC BAA-1333).